Here is a 456-residue protein sequence, read N- to C-terminus: Cysteine--tRNA ligase (456 aa).

Residue Cys-28 participates in Zn(2+) binding. The 'HIGH' region signature appears at Ile-30–His-40. Residues Cys-209, His-234, and Glu-238 each contribute to the Zn(2+) site. The 'KMSKS' region motif lies at Lys-266 to Ser-270. Lys-269 serves as a coordination point for ATP.

It belongs to the class-I aminoacyl-tRNA synthetase family. Monomer. Requires Zn(2+) as cofactor.

The protein localises to the cytoplasm. It catalyses the reaction tRNA(Cys) + L-cysteine + ATP = L-cysteinyl-tRNA(Cys) + AMP + diphosphate. The protein is Cysteine--tRNA ligase of Legionella pneumophila (strain Paris).